Reading from the N-terminus, the 529-residue chain is Probable serine carboxypeptidase ARB_06414 (529 aa).

The signal sequence occupies residues 1-19 (MRGLSYFVLALSAIDAAAA). A disordered region spans residues 171 to 191 (PTDDNPSRPVGTGFSQGKPSV). Ser225 is a catalytic residue. Residues Asn284 and Asn377 are each glycosylated (N-linked (GlcNAc...) asparagine). The active site involves Asp434. Asn440 and Asn448 each carry an N-linked (GlcNAc...) asparagine glycan. Residue His503 is part of the active site.

The protein belongs to the peptidase S10 family.

Its subcellular location is the secreted. Functionally, removes acidic, neutral and basic amino acids as well as proline from the C-terminal position. The polypeptide is Probable serine carboxypeptidase ARB_06414 (Arthroderma benhamiae (strain ATCC MYA-4681 / CBS 112371) (Trichophyton mentagrophytes)).